The following is a 228-amino-acid chain: Lipoprotein-releasing system ATP-binding protein LolD (228 aa).

The ABC transporter domain maps to 6–227; sequence LELLGIDRTY…LKDGKLIDYV (222 aa). 42 to 49 serves as a coordination point for ATP; that stretch reads GPSGSGKS.

The protein belongs to the ABC transporter superfamily. Lipoprotein translocase (TC 3.A.1.125) family. As to quaternary structure, the complex is composed of two ATP-binding proteins (LolD) and two transmembrane proteins (LolC and LolE).

It localises to the cell inner membrane. Part of the ABC transporter complex LolCDE involved in the translocation of mature outer membrane-directed lipoproteins, from the inner membrane to the periplasmic chaperone, LolA. Responsible for the formation of the LolA-lipoprotein complex in an ATP-dependent manner. In Hyphomonas neptunium (strain ATCC 15444), this protein is Lipoprotein-releasing system ATP-binding protein LolD.